Here is a 247-residue protein sequence, read N- to C-terminus: E3 SUMO-protein ligase NSE2 (247 aa).

Met1 is subject to N-acetylmethionine. Glycyl lysine isopeptide (Lys-Gly) (interchain with G-Cter in SUMO2) cross-links involve residues Lys90 and Lys107. Ser116 is modified (phosphoserine). Glycyl lysine isopeptide (Lys-Gly) (interchain with G-Cter in SUMO2) cross-links involve residues Lys125 and Lys130. Residues Val154–Lys240 form an SP-RING-type zinc finger. Zn(2+) contacts are provided by Cys185, His187, Cys210, and Cys215.

The protein belongs to the NSE2 family. As to quaternary structure, component of the SMC5-SMC6 complex which consists at least of SMC5, SMC6, NSMCE2, NSMCE1, NSMCE4A or EID3 and NSMCE3. Sumoylated, possibly via autosumoylation.

Its subcellular location is the nucleus. It localises to the chromosome. It is found in the telomere. The protein localises to the PML body. Its pathway is protein modification; protein sumoylation. In terms of biological role, E3 SUMO-protein ligase component of the SMC5-SMC6 complex, a complex involved in DNA double-strand break repair by homologous recombination. Is not be required for the stability of the complex. The complex may promote sister chromatid homologous recombination by recruiting the SMC1-SMC3 cohesin complex to double-strand breaks. Acts as an E3 ligase mediating SUMO attachment to various proteins such as SMC6L1 and TSNAX, the shelterin complex subunits TERF1, TERF2, TINF2 and TERF2IP, RAD51AP1, and maybe the cohesin components RAD21 and STAG2. Required for recruitment of telomeres to PML nuclear bodies. Required for sister chromatid cohesion during prometaphase and mitotic progression. The sequence is that of E3 SUMO-protein ligase NSE2 (Nsmce2) from Mus musculus (Mouse).